A 668-amino-acid chain; its full sequence is Probable tRNA (uracil-O(2)-)-methyltransferase (668 aa).

Residues 441-460 (QHTDSLHISTKSSLDKDDPP) form a disordered region. The C3H1-type zinc-finger motif lies at 620–649 (LKTRLCWFYVHHPNGCPRVAKSCPYAHGAE).

This sequence belongs to the TRM44 family.

It is found in the cytoplasm. It carries out the reaction uridine(44) in tRNA(Ser) + S-adenosyl-L-methionine = 2'-O-methyluridine(44) in tRNA(Ser) + S-adenosyl-L-homocysteine + H(+). Probable adenosyl-L-methionine (AdoMet)-dependent tRNA (uracil-O(2)-)-methyltransferase. The polypeptide is Probable tRNA (uracil-O(2)-)-methyltransferase (trmt44) (Xenopus laevis (African clawed frog)).